Reading from the N-terminus, the 194-residue chain is Adenylate kinase (194 aa).

10-15 (GAGKGT) is an ATP binding site. The NMP stretch occupies residues 30–59 (STGDMLRAAVAQQSEIGKRAKAVMDAGQLV). AMP-binding positions include T31, R36, 57-59 (QLV), 85-88 (GYPR), and Q92. The LID stretch occupies residues 126–142 (SRVAETIAKGGQVRSDD). R127 provides a ligand contact to ATP. 2 residues coordinate AMP: R139 and R150. A178 provides a ligand contact to ATP.

The protein belongs to the adenylate kinase family. As to quaternary structure, monomer.

Its subcellular location is the cytoplasm. It carries out the reaction AMP + ATP = 2 ADP. It participates in purine metabolism; AMP biosynthesis via salvage pathway; AMP from ADP: step 1/1. In terms of biological role, catalyzes the reversible transfer of the terminal phosphate group between ATP and AMP. Plays an important role in cellular energy homeostasis and in adenine nucleotide metabolism. The chain is Adenylate kinase from Brucella anthropi (strain ATCC 49188 / DSM 6882 / CCUG 24695 / JCM 21032 / LMG 3331 / NBRC 15819 / NCTC 12168 / Alc 37) (Ochrobactrum anthropi).